Consider the following 344-residue polypeptide: L-rhamnose-proton symporter (344 aa).

The next 10 helical transmembrane spans lie at 4–24 (AITMGIFWHLIGAASAACFYA), 38–58 (WSVGGIVSWIILPWAISALLL), 68–88 (FSLSTLLPVFLFGAMWGIGNI), 101–121 (MGIGIAIGITLIVGTLMTPII), 137–157 (TLLGVLVALIGVGIVTRAGQL), 175–195 (LVLAVMCGIFSAGMSFAMNAA), 214–234 (LPSYVIIMGGGAIINLGFCFI), 259–279 (VLLSALGGLMWYLQFFFYAWG), 290–310 (ISWMLHMSFYVLCGGIVGLVL), and 323–343 (VLSLGCVVIIVAANIVGIGMA).

This sequence belongs to the L-rhamnose transporter (TC 2.A.7.6) family.

It is found in the cell inner membrane. It catalyses the reaction L-rhamnopyranose(in) + H(+)(in) = L-rhamnopyranose(out) + H(+)(out). Uptake of L-rhamnose across the cytoplasmic membrane with the concomitant transport of protons into the cell (symport system). The chain is L-rhamnose-proton symporter from Escherichia coli (strain 55989 / EAEC).